The following is a 348-amino-acid chain: DnaJ homolog subfamily B member 5 (348 aa).

A J domain is found at 4–68 (DYYKILGIPS…KKRGLYDQYG (65 aa)).

The chain is DnaJ homolog subfamily B member 5 (DNAJB5) from Bos taurus (Bovine).